A 226-amino-acid chain; its full sequence is UPF0758 protein SPJ_1027 (226 aa).

Residues S103 to L225 enclose the MPN domain. H174, H176, and D187 together coordinate Zn(2+). The short motif at H174–D187 is the JAMM motif element.

This sequence belongs to the UPF0758 family.

This chain is UPF0758 protein SPJ_1027, found in Streptococcus pneumoniae (strain JJA).